A 31-amino-acid polypeptide reads, in one-letter code: Cyclotide Hyfl-A (31 aa).

Residues 1-31 constitute a cross-link (cyclopeptide (Ser-Asn)); the sequence is SISCGESCVYIPCTVTALVGCTCKDKVCYLN. Cystine bridges form between C4–C21, C8–C23, and C13–C28.

This sequence belongs to the cyclotide family. Bracelet subfamily. Post-translationally, this is a cyclic peptide.

Probably participates in a plant defense mechanism. This Hybanthus floribundus (Greenviolet) protein is Cyclotide Hyfl-A.